The primary structure comprises 2559 residues: Ubiquitin carboxyl-terminal hydrolase 9X (2559 aa).

Polar residues predominate over residues 1-44 (MTATTRGSPVGGNDNQGQAPDGQSQPPLQQNQTSSPDSSNENSP). Residues 1–64 (MTATTRGSPV…DAPPQIEDEE (64 aa)) are disordered. 3 positions are modified to phosphoserine: Ser374, Ser375, and Ser588. Residues 967 to 999 (QISSNMPSSPDSSSDSSTGSPGNHGNHYSDGPN) are disordered. Over residues 969–989 (SSNMPSSPDSSSDSSTGSPGN) the composition is skewed to low complexity. The USP domain occupies 1557-1956 (VGLKNAGATC…NAYILFYERM (400 aa)). Cys1566 acts as the Nucleophile in catalysis. The segment at 1592–1633 (GSDVDDDMSGDEKQDNESNVDPRDDVFGYPQQFEDKPPLSKT) is disordered. Ser1600 carries the phosphoserine modification. 2 stretches are compositionally biased toward basic and acidic residues: residues 1601–1617 (GDEKQDNESNVDPRDDV) and 1624–1633 (FEDKPPLSKT). Residues Cys1727, His1729, Cys1771, and Cys1774 each contribute to the Zn(2+) site. The Proton acceptor role is filled by His1879. Phosphoserine is present on Ser2443. Residues 2475-2484 (PEEEPDDQDA) show a composition bias toward acidic residues. The tract at residues 2475–2559 (PEEEPDDQDA…QTKGSVKCTY (85 aa)) is disordered. 2 stretches are compositionally biased toward polar residues: residues 2503-2513 (PGSQYQQNNHV) and 2527-2537 (NNPQRTGQRAQ). Position 2540 is a phosphotyrosine (Tyr2540). Ser2547 carries the post-translational modification Phosphoserine. Residue Thr2551 is modified to Phosphothreonine.

The protein belongs to the peptidase C19 family. As to quaternary structure, interacts with SMAD4, MARK4, NUAK1 and BIRC5/survivin. Interacts with DCX. Interacts with OTUD4 and USP7; the interaction is direct. As to expression, highest levels in liver and brain with expression also detected in heart, muscle, spleen and kidney (at protein leve). Ubiquitously expressed in adult tissues.

Its subcellular location is the cytoplasm. The protein resides in the cytosol. The protein localises to the cell projection. It localises to the growth cone. It is found in the cytoskeleton. Its subcellular location is the cilium axoneme. It carries out the reaction Thiol-dependent hydrolysis of ester, thioester, amide, peptide and isopeptide bonds formed by the C-terminal Gly of ubiquitin (a 76-residue protein attached to proteins as an intracellular targeting signal).. In terms of biological role, deubiquitinase involved both in the processing of ubiquitin precursors and of ubiquitinated proteins. May therefore play an important regulatory role at the level of protein turnover by preventing degradation of proteins through the removal of conjugated ubiquitin. Specifically hydrolyzes 'Lys-11'-, followed by 'Lys-63'-, 'Lys-48'- and 'Lys-6'-linked polyubiquitins chains. Essential component of TGF-beta/BMP signaling cascade. Specifically deubiquitinates monoubiquitinated SMAD4, opposing the activity of E3 ubiquitin-protein ligase TRIM33. Deubiquitinates alkylation repair enzyme ALKBH3. OTUD4 recruits USP7 and USP9X to stabilize ALKBH3, thereby promoting the repair of alkylated DNA lesions. Deubiquitinates RNA demethylase enzyme ALKBH5, promoting its stability. Deubiquitinates mTORC2 complex component RICTOR at 'Lys-294' by removing 'Lys-63'-linked polyubiquitin chains, stabilizing RICTOR and enhancing its binding to MTOR, thus promoting mTORC2 complex assembly. Regulates chromosome alignment and segregation in mitosis by regulating the localization of BIRC5/survivin to mitotic centromeres. Involved in axonal growth and neuronal cell migration. Regulates cellular clock function by enhancing the protein stability and transcriptional activity of the core circadian protein BMAL1 via its deubiquitinating activity. Acts as a regulator of peroxisome import by mediating deubiquitination of PEX5: specifically deubiquitinates PEX5 monoubiquitinated at 'Cys-11' following its retrotranslocation into the cytosol, resetting PEX5 for a subsequent import cycle. Deubiquitinates PEG10. Inhibits the activation of the Hippo signaling pathway via deubiquitination of AMOTL2 at 'Lys-337' and 'Lys-404' which prohibits its interaction with and activation of LATS2. Loss of LATS2 activation and subsequent loss of YAP1 phosphorylation results in an increase in YAP1-driven transcription of target genes. This is Ubiquitin carboxyl-terminal hydrolase 9X from Mus musculus (Mouse).